Here is a 186-residue protein sequence, read N- to C-terminus: Large ribosomal subunit protein uL10 (186 aa).

Belongs to the universal ribosomal protein uL10 family. Part of the ribosomal stalk of the 50S ribosomal subunit. The N-terminus interacts with L11 and the large rRNA to form the base of the stalk. The C-terminus forms an elongated spine to which L12 dimers bind in a sequential fashion forming a multimeric L10(L12)X complex.

In terms of biological role, forms part of the ribosomal stalk, playing a central role in the interaction of the ribosome with GTP-bound translation factors. The chain is Large ribosomal subunit protein uL10 (rplJ) from Streptomyces virginiae (Streptomyces cinnamonensis).